The sequence spans 113 residues: Hemerythrin (113 aa).

Residues H25, H54, E58, H73, H77, H101, and D106 each coordinate Fe cation.

The protein belongs to the hemerythrin family. In terms of assembly, homotrimer.

Hemerythrin is a respiratory protein in blood cells of certain marine worms. The oxygen-binding site in each chain contains two iron atoms. This Siphonosoma cumanense (Sipunculan worm) protein is Hemerythrin.